The chain runs to 693 residues: DNA ligase (693 aa).

NAD(+) is bound by residues 40–44 (DSEYD), 89–90 (SL), and Glu121. Lys123 (N6-AMP-lysine intermediate) is an active-site residue. Residues Arg144, Glu179, Lys295, and Lys319 each coordinate NAD(+). Zn(2+)-binding residues include Cys413, Cys416, Cys431, and Cys437. A BRCT domain is found at 610–693 (REQNILTGKI…AFIKCLEKEV (84 aa)).

Belongs to the NAD-dependent DNA ligase family. LigA subfamily. The cofactor is Mg(2+). It depends on Mn(2+) as a cofactor.

It carries out the reaction NAD(+) + (deoxyribonucleotide)n-3'-hydroxyl + 5'-phospho-(deoxyribonucleotide)m = (deoxyribonucleotide)n+m + AMP + beta-nicotinamide D-nucleotide.. In terms of biological role, DNA ligase that catalyzes the formation of phosphodiester linkages between 5'-phosphoryl and 3'-hydroxyl groups in double-stranded DNA using NAD as a coenzyme and as the energy source for the reaction. It is essential for DNA replication and repair of damaged DNA. The polypeptide is DNA ligase (Rickettsia typhi (strain ATCC VR-144 / Wilmington)).